The following is a 768-amino-acid chain: cGMP-dependent protein kinase, isozyme 1 (768 aa).

The regulatory stretch occupies residues 1-192 (MAAGMLTDRE…NDFLKNIDAS (192 aa)). The segment covering 114–127 (PLASTSSASPSGRT) has biased composition (low complexity). The interval 114–134 (PLASTSSASPSGRTSADEVRP) is disordered. Residues 249–252 (GELA), 259–260 (RT), Arg-366, 375–378 (GEQA), 385–386 (RT), and Tyr-421 each bind 3',5'-cyclic GMP. The Protein kinase domain maps to 457–717 (LEVVSTLGIG…IQDIKKHKWF (261 aa)). ATP is bound by residues 463-471 (LGIGGFGRV) and Lys-488. Asp-582 (proton acceptor) is an active-site residue. One can recognise an AGC-kinase C-terminal domain in the interval 718 to 768 (LGFDWDGLASQLLIPPFVRPIAHPTDVRYFDRFPCDLNEPPDELSGWDADF).

It belongs to the protein kinase superfamily. AGC Ser/Thr protein kinase family. cGMP subfamily. As to quaternary structure, homodimer. Mg(2+) is required as a cofactor. Post-translationally, autophosphorylated. In terms of tissue distribution, in embryo stage 13, expression is seen in a few large, irregular cells having the appearance of hemocytes or macrophages. In adults, expression is seen in optic lamina and weakly in testis.

The catalysed reaction is L-seryl-[protein] + ATP = O-phospho-L-seryl-[protein] + ADP + H(+). The enzyme catalyses L-threonyl-[protein] + ATP = O-phospho-L-threonyl-[protein] + ADP + H(+). Its activity is regulated as follows. Binding of cGMP results in enzyme activation. This is cGMP-dependent protein kinase, isozyme 1 (Pkg21D) from Drosophila melanogaster (Fruit fly).